The chain runs to 294 residues: 4-diphosphocytidyl-2-C-methyl-D-erythritol kinase (294 aa).

Lysine 11 is a catalytic residue. 93–103 (PFGAGLGGGSS) serves as a coordination point for ATP. The active site involves aspartate 135.

Belongs to the GHMP kinase family. IspE subfamily.

The catalysed reaction is 4-CDP-2-C-methyl-D-erythritol + ATP = 4-CDP-2-C-methyl-D-erythritol 2-phosphate + ADP + H(+). Its pathway is isoprenoid biosynthesis; isopentenyl diphosphate biosynthesis via DXP pathway; isopentenyl diphosphate from 1-deoxy-D-xylulose 5-phosphate: step 3/6. In terms of biological role, catalyzes the phosphorylation of the position 2 hydroxy group of 4-diphosphocytidyl-2C-methyl-D-erythritol. This chain is 4-diphosphocytidyl-2-C-methyl-D-erythritol kinase, found in Chlorobium phaeobacteroides (strain DSM 266 / SMG 266 / 2430).